We begin with the raw amino-acid sequence, 255 residues long: tRNA (guanine-N(1)-)-methyltransferase (255 aa).

S-adenosyl-L-methionine-binding positions include Gly-113 and 133 to 138; that span reads IGDYVL.

This sequence belongs to the RNA methyltransferase TrmD family. In terms of assembly, homodimer.

It localises to the cytoplasm. The catalysed reaction is guanosine(37) in tRNA + S-adenosyl-L-methionine = N(1)-methylguanosine(37) in tRNA + S-adenosyl-L-homocysteine + H(+). Functionally, specifically methylates guanosine-37 in various tRNAs. This is tRNA (guanine-N(1)-)-methyltransferase from Escherichia coli O81 (strain ED1a).